We begin with the raw amino-acid sequence, 463 residues long: V-type ATP synthase beta chain (463 aa).

It belongs to the ATPase alpha/beta chains family.

Produces ATP from ADP in the presence of a proton gradient across the membrane. The V-type beta chain is a regulatory subunit. This Halothermothrix orenii (strain H 168 / OCM 544 / DSM 9562) protein is V-type ATP synthase beta chain.